Here is a 124-residue protein sequence, read N- to C-terminus: Sulfur globule protein CV2 (124 aa).

An N-terminal signal peptide occupies residues 1 to 22; sequence MKKLATAAAVAALLGASASASA.

In terms of assembly, the protein envelope of the sulfur globules is composed of the three different proteins CV1, CV2 and CV3.

Structural protein of the sulfur globules, which are intracellular globules that serve for sulfur storage in purple sulfur bacteria. The protein is Sulfur globule protein CV2 (sgpB) of Allochromatium vinosum (strain ATCC 17899 / DSM 180 / NBRC 103801 / NCIMB 10441 / D) (Chromatium vinosum).